A 246-amino-acid chain; its full sequence is MKPSQVRSKAFAMPLTSPAFPMGPYRFVNREFLIITYRTDMDRLREIVPEPLEVKEPLVHYEFIRMPDSTGFGDYTESGQVIPVEYKGQPGGYTLAMYLNDHPPIAGGRELWGFPKKLAQPTLQTHIDTLLGTLDYGPVRVATGTMGYKHQELDLEEQAKRLAGANFLLKIIPHVDGSARVCELVRYYLQDIEMKGAWTGPASLQLAPHALAPVADLPVLEIVEARHLLADLTLGLGEVVYDYLAQ.

Lys-116 serves as the catalytic Schiff-base intermediate with acetoacetate.

Belongs to the ADC family.

It carries out the reaction acetoacetate + H(+) = acetone + CO2. Functionally, catalyzes the conversion of acetoacetate to acetone and carbon dioxide. In Burkholderia mallei (strain NCTC 10247), this protein is Acetoacetate decarboxylase.